The sequence spans 376 residues: Adipocyte plasma membrane-associated protein (376 aa).

Residues 1-17 (MTFLMLAVSLAIPLLGA) form a helical membrane-spanning segment. Asparagine 120 is a glycosylation site (N-linked (GlcNAc...) asparagine).

This sequence belongs to the strictosidine synthase family.

The protein localises to the membrane. Exhibits strong arylesterase activity with beta-naphthyl acetate and phenyl acetate. May play a role in adipocyte differentiation. The chain is Adipocyte plasma membrane-associated protein (Apmap) from Rattus norvegicus (Rat).